The sequence spans 104 residues: Nucleoid-associated protein Dtur_0258 (104 aa).

A disordered region spans residues 84–104 (EKSAEKMGSLTDGLPLPPGLF).

The protein belongs to the YbaB/EbfC family. As to quaternary structure, homodimer.

Its subcellular location is the cytoplasm. It is found in the nucleoid. Its function is as follows. Binds to DNA and alters its conformation. May be involved in regulation of gene expression, nucleoid organization and DNA protection. The sequence is that of Nucleoid-associated protein Dtur_0258 from Dictyoglomus turgidum (strain DSM 6724 / Z-1310).